The sequence spans 243 residues: Pyridoxine 5'-phosphate synthase (243 aa).

Asparagine 9 is a 3-amino-2-oxopropyl phosphate binding site. Position 11–12 (11–12 (DH)) interacts with 1-deoxy-D-xylulose 5-phosphate. A 3-amino-2-oxopropyl phosphate-binding site is contributed by arginine 20. The active-site Proton acceptor is histidine 45. 1-deoxy-D-xylulose 5-phosphate is bound by residues arginine 47 and histidine 52. Glutamate 72 (proton acceptor) is an active-site residue. Threonine 102 is a binding site for 1-deoxy-D-xylulose 5-phosphate. The active-site Proton donor is histidine 193. 3-amino-2-oxopropyl phosphate contacts are provided by residues glycine 194 and 215–216 (GH).

The protein belongs to the PNP synthase family. In terms of assembly, homooctamer; tetramer of dimers.

The protein resides in the cytoplasm. The catalysed reaction is 3-amino-2-oxopropyl phosphate + 1-deoxy-D-xylulose 5-phosphate = pyridoxine 5'-phosphate + phosphate + 2 H2O + H(+). It functions in the pathway cofactor biosynthesis; pyridoxine 5'-phosphate biosynthesis; pyridoxine 5'-phosphate from D-erythrose 4-phosphate: step 5/5. Catalyzes the complicated ring closure reaction between the two acyclic compounds 1-deoxy-D-xylulose-5-phosphate (DXP) and 3-amino-2-oxopropyl phosphate (1-amino-acetone-3-phosphate or AAP) to form pyridoxine 5'-phosphate (PNP) and inorganic phosphate. The chain is Pyridoxine 5'-phosphate synthase from Yersinia pseudotuberculosis serotype I (strain IP32953).